The chain runs to 179 residues: Large ribosomal subunit protein uL6 (179 aa).

Belongs to the universal ribosomal protein uL6 family. In terms of assembly, part of the 50S ribosomal subunit.

Functionally, this protein binds to the 23S rRNA, and is important in its secondary structure. It is located near the subunit interface in the base of the L7/L12 stalk, and near the tRNA binding site of the peptidyltransferase center. The chain is Large ribosomal subunit protein uL6 from Mycobacterium leprae (strain Br4923).